Here is a 410-residue protein sequence, read N- to C-terminus: Chitinase-3-like protein 1 (410 aa).

The first 48 residues, 1–48 (MGVKAAQTGIWASQGQSIRVVGFQAQTAHRAICLLGFVVLVLLQCCSA), serve as a signal peptide directing secretion. The GH18 domain occupies 49–410 (YKLVCYYTSW…NAIKDALAAT (362 aa)). Residues C53 and C78 are joined by a disulfide bond. An N-linked (GlcNAc...) asparagine glycan is attached at N87. Residues 97–98 (EW), 124–127 (GGWN), Y168, 231–234 (MTYD), and R290 contribute to the chitin site. A disulfide bridge connects residues C327 and C391. An important for AKT1 activation and IL8 production region spans residues 351 to 365 (QWVGYDDQESVKSKV). W379 is a binding site for chitin.

This sequence belongs to the glycosyl hydrolase 18 family. In terms of assembly, monomer.

It is found in the secreted. Its subcellular location is the extracellular space. It localises to the cytoplasm. The protein localises to the perinuclear region. The protein resides in the endoplasmic reticulum. Functionally, carbohydrate-binding lectin with a preference for chitin. Has no chitinase activity. May play a role in tissue remodeling and in the capacity of cells to respond to and cope with changes in their environment. Plays a role in T-helper cell type 2 (Th2) inflammatory response and IL-13-induced inflammation, regulating allergen sensitization, inflammatory cell apoptosis, dendritic cell accumulation and M2 macrophage differentiation. Facilitates invasion of pathogenic enteric bacteria into colonic mucosa and lymphoid organs. Mediates activation of AKT1 signaling pathway and subsequent IL8 production in colonic epithelial cells. Regulates antibacterial responses in lung by contributing to macrophage bacterial killing, controlling bacterial dissemination and augmenting host tolerance. Also regulates hyperoxia-induced injury, inflammation and epithelial apoptosis in lung. The chain is Chitinase-3-like protein 1 (CHI3L1) from Pongo abelii (Sumatran orangutan).